The sequence spans 96 residues: Colicin-K immunity protein (96 aa).

The chain crosses the membrane as a helical span at residues 73–93 (ALFYLLMAIPVGLPSFIYYTL).

It is found in the cell membrane. Its function is as follows. This protein is able to protect a cell, which harbors the plasmid ColK encoding colicin K, against colicin K. This is Colicin-K immunity protein (cki) from Escherichia coli.